The following is a 2090-amino-acid chain: Non-reducing polyketide synthase rdc1 (2090 aa).

The interval 12–250 (FLVGDQVDSW…NPLNIHALQH (239 aa)) is N-terminal acylcarrier protein transacylase (SAT) domain. The 434-residue stretch at 375 to 808 (TGRIAIVGMS…GGNACLLLED (434 aa)) folds into the Ketosynthase family 3 (KS3) domain. Residues cysteine 551, histidine 686, and histidine 726 each act as for beta-ketoacyl synthase activity in the active site. A malonyl-CoA:ACP transacylase (MAT) domain region spans residues 912–1195 (IFVFSGQGSH…NQVCTQFVRA (284 aa)). Serine 1003 functions as the For acyl/malonyl transferase activity in the catalytic mechanism. Residues 1293–1433 (QHVAKESSSN…LVVQKNVKAL (141 aa)) form an N-terminal hotdog fold region. Residues 1293 to 1607 (QHVAKESSSN…FVRISNALLQ (315 aa)) enclose the PKS/mFAS DH domain. Residues 1304–1604 (GKLEITFRAS…NLSFVRISNA (301 aa)) are product template (PT) domain. A C-terminal hotdog fold region spans residues 1459–1607 (QGHWLKHDIF…FVRISNALLQ (149 aa)). The segment at 1615 to 1650 (SKPVGRGMAKQEKQEVPATTEVVRQPEKEESRHSVD) is disordered. Over residues 1638–1649 (RQPEKEESRHSV) the composition is skewed to basic and acidic residues. Residues 1649–1726 (VDTPSFSDVL…DIKRAFDILT (78 aa)) form the Carrier domain. O-(pantetheine 4'-phosphoryl)serine is present on serine 1686. Residues 1820–1964 (ADGTGSIATY…THQHLKALFA (145 aa)) form a thioesterase (TE) domain region.

It functions in the pathway secondary metabolite biosynthesis. Non-reducing polyketide synthase; part of the gene cluster that mediates the biosynthesis of radicicol, a resorcylic acid lactone (RAL) that irreversibly inhibits the HSP90 molecular chaperone, an important target for cancer chemotherapy. The radicicol cluster encodes only two apparent post-PKS enzymes, a cytochrome P450 monooxygenase (rdc4) and a non-heme halogenase (rdc2) that could introduce the epoxide and the chlorine, respectively. If this cluster includes all the genes required for radicicol biosynthesis, the remaining structural features of radicicol are presumably generated by the PKSs rdc1 and rdc5. The C-2' ketone could arise if the R-PKS rdc5 and NR-PKS rdc1 each carry out four iterations, in contrast to the five iteration-three iteration split for the hypothemycin PKSs. The origin of the cis 5',6' double bond is not known. The radicicol R-PKS rdc5 ER domain may catalyze either double bond isomerization or reduction in the third iteration. This is Non-reducing polyketide synthase rdc1 from Metacordyceps chlamydosporia (Nematophagous fungus).